A 316-amino-acid chain; its full sequence is Olfactory receptor 10H28 (316 aa).

Topologically, residues 1–26 (MPGQNYSTISEFILFGFSAFPHQMLP) are extracellular. N-linked (GlcNAc...) asparagine glycosylation is present at N5. Residues 27–47 (ALFLLYLLMYLFTLLGNLVIM) traverse the membrane as a helical segment. The Cytoplasmic segment spans residues 48 to 57 (AAIWTEHRLH). A helical membrane pass occupies residues 58–78 (TPMYLFLCALSISEILFTVVI). Residues 79–100 (TPRMLSDMLSTHRSITFIACAN) are Extracellular-facing. C98 and C190 form a disulfide bridge. A helical transmembrane segment spans residues 101-121 (QLFFSFTFGYTHSFLLVVMGY). At 122-144 (DRYVAICRPLHYHALMSLQGCAR) the chain is on the cytoplasmic side. The chain crosses the membrane as a helical span at residues 145–165 (LVAWSWAGGSLIGMALTIIIF). At 166–207 (HLTFCESNVIHHILCHVFSLLKLACGERTAFVTIAVILVCVT) the chain is on the extracellular side. Residues 208–228 (PLIGCLVFIILSYIFIVAAIL) traverse the membrane as a helical segment. Over 229–241 (RIPSTEGRHKTFS) the chain is Cytoplasmic. A helical membrane pass occupies residues 242–262 (TCASHLTVVIVHYGFASIIYL). Topologically, residues 263–273 (KSRGLYSQYTD) are extracellular. The helical transmembrane segment at 274–294 (TLMSTTYTVFTPFLSPIIFSL) threads the bilayer. Over 295–316 (RNKELKNAIIKSFHRNVCQQSI) the chain is Cytoplasmic.

This sequence belongs to the G-protein coupled receptor 1 family.

The protein localises to the cell membrane. Its function is as follows. Odorant receptor. In Mus musculus (Mouse), this protein is Olfactory receptor 10H28.